Here is a 166-residue protein sequence, read N- to C-terminus: 6,7-dimethyl-8-ribityllumazine synthase (166 aa).

Residues Trp-31, 63–65 (SFE), and 85–87 (VII) each bind 5-amino-6-(D-ribitylamino)uracil. 90–91 (GT) contributes to the (2S)-2-hydroxy-3-oxobutyl phosphate binding site. His-93 serves as the catalytic Proton donor. Residue Phe-118 participates in 5-amino-6-(D-ribitylamino)uracil binding. Residue Arg-132 participates in (2S)-2-hydroxy-3-oxobutyl phosphate binding.

Belongs to the DMRL synthase family.

The enzyme catalyses (2S)-2-hydroxy-3-oxobutyl phosphate + 5-amino-6-(D-ribitylamino)uracil = 6,7-dimethyl-8-(1-D-ribityl)lumazine + phosphate + 2 H2O + H(+). It participates in cofactor biosynthesis; riboflavin biosynthesis; riboflavin from 2-hydroxy-3-oxobutyl phosphate and 5-amino-6-(D-ribitylamino)uracil: step 1/2. Functionally, catalyzes the formation of 6,7-dimethyl-8-ribityllumazine by condensation of 5-amino-6-(D-ribitylamino)uracil with 3,4-dihydroxy-2-butanone 4-phosphate. This is the penultimate step in the biosynthesis of riboflavin. The protein is 6,7-dimethyl-8-ribityllumazine synthase of Cutibacterium acnes (strain DSM 16379 / KPA171202) (Propionibacterium acnes).